A 70-amino-acid polypeptide reads, in one-letter code: uncharacterized protein (70 aa).

A helical transmembrane segment spans residues 15–37 (LLVSSISESAVALIIITIRILFS).

Its subcellular location is the membrane. This is an uncharacterized protein from Saccharomyces cerevisiae (strain ATCC 204508 / S288c) (Baker's yeast).